The chain runs to 376 residues: Succinyl-diaminopimelate desuccinylase (376 aa).

Histidine 67 lines the Zn(2+) pocket. Residue aspartate 69 is part of the active site. Aspartate 100 is a Zn(2+) binding site. Glutamate 134 (proton acceptor) is an active-site residue. Zn(2+) is bound by residues glutamate 135, glutamate 163, and histidine 349.

Belongs to the peptidase M20A family. DapE subfamily. In terms of assembly, homodimer. Requires Zn(2+) as cofactor. It depends on Co(2+) as a cofactor.

The catalysed reaction is N-succinyl-(2S,6S)-2,6-diaminopimelate + H2O = (2S,6S)-2,6-diaminopimelate + succinate. Its pathway is amino-acid biosynthesis; L-lysine biosynthesis via DAP pathway; LL-2,6-diaminopimelate from (S)-tetrahydrodipicolinate (succinylase route): step 3/3. Functionally, catalyzes the hydrolysis of N-succinyl-L,L-diaminopimelic acid (SDAP), forming succinate and LL-2,6-diaminopimelate (DAP), an intermediate involved in the bacterial biosynthesis of lysine and meso-diaminopimelic acid, an essential component of bacterial cell walls. This Shewanella denitrificans (strain OS217 / ATCC BAA-1090 / DSM 15013) protein is Succinyl-diaminopimelate desuccinylase.